The chain runs to 444 residues: ATP-dependent protease ATPase subunit HslU (444 aa).

Residues Ile20, 62-67 (GVGKTE), Asp257, Glu322, and Arg394 each bind ATP.

The protein belongs to the ClpX chaperone family. HslU subfamily. In terms of assembly, a double ring-shaped homohexamer of HslV is capped on each side by a ring-shaped HslU homohexamer. The assembly of the HslU/HslV complex is dependent on binding of ATP.

Its subcellular location is the cytoplasm. Functionally, ATPase subunit of a proteasome-like degradation complex; this subunit has chaperone activity. The binding of ATP and its subsequent hydrolysis by HslU are essential for unfolding of protein substrates subsequently hydrolyzed by HslV. HslU recognizes the N-terminal part of its protein substrates and unfolds these before they are guided to HslV for hydrolysis. This is ATP-dependent protease ATPase subunit HslU from Bordetella avium (strain 197N).